Consider the following 127-residue polypeptide: Fumarate reductase subunit C (127 aa).

3 helical membrane-spanning segments follow: residues 30–50 (ATVLPLILFTLFLTVGLGSLV), 67–87 (LVIAINLVALAGSLFHAQTFF), and 107–127 (IIVLAQWAAVAFISLIVLIVV).

Belongs to the FrdC family. As to quaternary structure, part of an enzyme complex containing four subunits: a flavoprotein (FrdA), an iron-sulfur protein (FrdB), and two hydrophobic anchor proteins (FrdC and FrdD).

It is found in the cell inner membrane. Its function is as follows. Anchors the catalytic components of the fumarate reductase complex to the cell membrane, binds quinones. This is Fumarate reductase subunit C from Vibrio cholerae serotype O1 (strain ATCC 39541 / Classical Ogawa 395 / O395).